Consider the following 393-residue polypeptide: Na(+)/H(+) antiporter NhaA (393 aa).

11 consecutive transmembrane segments (helical) span residues 18–38 (AGGV…NSPW), 65–85 (MLIW…GLEI), 101–121 (MLPA…YAAI), 131–151 (GWGI…VLLG), 160–180 (VFLT…IAFF), 184–204 (NLSP…LGLN), 210–230 (AVGP…KSGI), 260–280 (ALQP…NAGV), 298–318 (IAFG…WLLI), 334–354 (FFGV…IGSL), and 369–389 (IGVL…LLAS).

It belongs to the NhaA Na(+)/H(+) (TC 2.A.33) antiporter family.

The protein localises to the cell inner membrane. The enzyme catalyses Na(+)(in) + 2 H(+)(out) = Na(+)(out) + 2 H(+)(in). Functionally, na(+)/H(+) antiporter that extrudes sodium in exchange for external protons. The polypeptide is Na(+)/H(+) antiporter NhaA (Albidiferax ferrireducens (strain ATCC BAA-621 / DSM 15236 / T118) (Rhodoferax ferrireducens)).